A 360-amino-acid polypeptide reads, in one-letter code: 3-dehydroquinate synthase (360 aa).

Residues 71 to 76 (DGEQYK), 105 to 109 (GVVGD), 129 to 130 (TT), K142, K151, and 169 to 172 (TLNT) contribute to the NAD(+) site. Residues E184, H248, and H265 each coordinate Zn(2+).

This sequence belongs to the sugar phosphate cyclases superfamily. Dehydroquinate synthase family. Co(2+) serves as cofactor. The cofactor is Zn(2+). Requires NAD(+) as cofactor.

It localises to the cytoplasm. The catalysed reaction is 7-phospho-2-dehydro-3-deoxy-D-arabino-heptonate = 3-dehydroquinate + phosphate. It participates in metabolic intermediate biosynthesis; chorismate biosynthesis; chorismate from D-erythrose 4-phosphate and phosphoenolpyruvate: step 2/7. Functionally, catalyzes the conversion of 3-deoxy-D-arabino-heptulosonate 7-phosphate (DAHP) to dehydroquinate (DHQ). The polypeptide is 3-dehydroquinate synthase (Coxiella burnetii (strain CbuG_Q212) (Coxiella burnetii (strain Q212))).